The following is a 768-amino-acid chain: Pentatricopeptide repeat-containing protein At4g01030, mitochondrial (768 aa).

The N-terminal 25 residues, 1-25 (MYRFLGLTIHGGLIKRGLDNSDTRV), are a transit peptide targeting the mitochondrion. PPR repeat units follow at residues 22–52 (DTRV…MPKR), 53–87 (DDLA…GAKA), 88–122 (YDST…GLES), 123–153 (NVSM…MKDR), 154–188 (NLSS…GLKP), 189–223 (DIVT…GLKP), 224–254 (STSS…ILRN), 259–289 (DVYV…MDAK), 290–324 (NIVA…GIKP), 325–359 (DAIT…GVAP), 360–394 (NVVS…GVGP), 395–429 (NAAT…NLIC), 430–460 (DAYV…IKNK), 461–495 (SLAS…GMEP), 496–526 (DAIT…MRSR), and 532–562 (TIEH…MSLK). The type E motif stretch occupies residues 567–642 (IWGAFLSSCK…QDLWSWIQID (76 aa)). Positions 643–673 (QTVHIFYAEGKTHPDEGDIYFELYKLVSEMK) are type E(+) motif. The segment at 674–768 (KSGYVPDTSC…DGKCSCNDSW (95 aa)) is type DYW motif.

This sequence belongs to the PPR family. PCMP-H subfamily.

The protein localises to the mitochondrion. This chain is Pentatricopeptide repeat-containing protein At4g01030, mitochondrial (PCMP-H65), found in Arabidopsis thaliana (Mouse-ear cress).